The chain runs to 146 residues: Ribosome-binding factor A (146 aa).

Positions Gln122–Ala146 are disordered. Residues Asp130–Ala146 show a composition bias toward acidic residues.

This sequence belongs to the RbfA family. As to quaternary structure, monomer. Binds 30S ribosomal subunits, but not 50S ribosomal subunits or 70S ribosomes.

It localises to the cytoplasm. One of several proteins that assist in the late maturation steps of the functional core of the 30S ribosomal subunit. Associates with free 30S ribosomal subunits (but not with 30S subunits that are part of 70S ribosomes or polysomes). Required for efficient processing of 16S rRNA. May interact with the 5'-terminal helix region of 16S rRNA. This Shewanella sp. (strain MR-7) protein is Ribosome-binding factor A.